We begin with the raw amino-acid sequence, 618 residues long: MRATAAYVGMLRLGRMCAGSPGVLGARAALSRSWQEARLQAVRFLSSREVDRMVPLPVGGLSYVQGCTKNHLLSKTVGRCLEATAQRVPEREALVDLHENIRLTFAQLKEEVDKAASGLLSIGLCKGDRLGMWGPNSYAWVLIQLATAQAGIILVSVNPAYQATELEYVLKKVGCKALVFPKQFKTQQYYNILKQICPEVENAQPGALKSQRLPDLTTVISVDAPLPGTLLLDEVLAAGSTQQHLEQLQHIQQFLSCHDPINIQFTSGTTGSPKGATLSHYNIVNNSSILGERLKLHEKTPEQLRMILPSPLYHCLGSVGGTMMCLMYGATLILASPVFNGKKALEAISRERGSFLYGTPTMFVDILNQPDFSSYDISTMRGGVIAGSPAPPELIRAIINKINMKDLVVAYGTTENSPVTFANFPEDTVEQKAESVGRIMPHTEARIMNMEAGMLAELNTPGELCIRGYCVMLGYWGEPQKTGEAVDQDKWYRTGDIATMNEQGFCKIVGRSKDMIIRGGENIYPAELEDFFHTHPKVQEVQVVGVKDDRMGEEICACIRLKDGEETTAEEMKAFCKGKISHFKIPRYIVFVTNYPLTTSGKIQKFKLREQMERHLNL.

The N-terminal 44 residues, 1–44, are a transit peptide targeting the mitochondrion; the sequence is MRATAAYVGMLRLGRMCAGSPGVLGARAALSRSWQEARLQAVRF. The residue at position 182 (K182) is an N6-acetyllysine. N6-acetyllysine; alternate is present on K185. K185 carries the N6-succinyllysine; alternate modification. 266 to 274 serves as a coordination point for ATP; it reads TSGTTGSPK. N6-acetyllysine is present on residues K343 and K401. Residue K481 is modified to N6-succinyllysine. D496 and R511 together coordinate ATP. Residue K513 is modified to N6-acetyllysine. 2 positions are modified to N6-acetyllysine; alternate: K547 and K573. Residues K547 and K573 each carry the N6-succinyllysine; alternate modification. K602 contacts ATP. K602 is modified (N6-succinyllysine).

Belongs to the ATP-dependent AMP-binding enzyme family.

It localises to the mitochondrion. The catalysed reaction is a medium-chain fatty acid + ATP + CoA = a medium-chain fatty acyl-CoA + AMP + diphosphate. The enzyme catalyses octanoate + ATP + CoA = octanoyl-CoA + AMP + diphosphate. In terms of biological role, acyl-CoA synthases catalyze the initial reaction in fatty acid metabolism, by forming a thioester with CoA. Has some preference toward medium-chain substrates. Plays a role in adipocyte differentiation. In Macaca fascicularis (Crab-eating macaque), this protein is Medium-chain acyl-CoA ligase ACSF2, mitochondrial.